A 403-amino-acid polypeptide reads, in one-letter code: S-adenosylmethionine synthase (403 aa).

H16 is an ATP binding site. Position 18 (D18) interacts with Mg(2+). Residue E44 coordinates K(+). L-methionine-binding residues include E57 and Q100. The tract at residues 100 to 110 is flexible loop; it reads QSPDIAQGVDR. Residues 106 to 126 form a disordered region; sequence QGVDRSYESRSGSASTDAHDL. ATP contacts are provided by residues 176 to 178, 248 to 249, D257, 263 to 264, A280, and K284; these read DGK, KF, and RK. Residue D257 coordinates L-methionine. Position 288 (K288) interacts with L-methionine.

The protein belongs to the AdoMet synthase family. In terms of assembly, homotetramer; dimer of dimers. It depends on Mg(2+) as a cofactor. K(+) serves as cofactor.

Its subcellular location is the cytoplasm. It catalyses the reaction L-methionine + ATP + H2O = S-adenosyl-L-methionine + phosphate + diphosphate. It functions in the pathway amino-acid biosynthesis; S-adenosyl-L-methionine biosynthesis; S-adenosyl-L-methionine from L-methionine: step 1/1. Catalyzes the formation of S-adenosylmethionine (AdoMet) from methionine and ATP. The overall synthetic reaction is composed of two sequential steps, AdoMet formation and the subsequent tripolyphosphate hydrolysis which occurs prior to release of AdoMet from the enzyme. In Clavibacter michiganensis subsp. michiganensis (strain NCPPB 382), this protein is S-adenosylmethionine synthase.